We begin with the raw amino-acid sequence, 372 residues long: Queuine tRNA-ribosyltransferase (372 aa).

The Proton acceptor role is filled by Asp89. Substrate-binding positions include 89–93, Asp161, and Gly232; that span reads DSGGF. Positions 262 to 268 are RNA binding; that stretch reads GIGDLPS. Catalysis depends on Asp281, which acts as the Nucleophile. An RNA binding; important for wobble base 34 recognition region spans residues 286–290; that stretch reads TKAAR. Residues Cys319, Cys321, Cys324, and His351 each coordinate Zn(2+).

It belongs to the queuine tRNA-ribosyltransferase family. In terms of assembly, homodimer. Within each dimer, one monomer is responsible for RNA recognition and catalysis, while the other monomer binds to the replacement base PreQ1. The cofactor is Zn(2+).

The catalysed reaction is 7-aminomethyl-7-carbaguanine + guanosine(34) in tRNA = 7-aminomethyl-7-carbaguanosine(34) in tRNA + guanine. It participates in tRNA modification; tRNA-queuosine biosynthesis. Catalyzes the base-exchange of a guanine (G) residue with the queuine precursor 7-aminomethyl-7-deazaguanine (PreQ1) at position 34 (anticodon wobble position) in tRNAs with GU(N) anticodons (tRNA-Asp, -Asn, -His and -Tyr). Catalysis occurs through a double-displacement mechanism. The nucleophile active site attacks the C1' of nucleotide 34 to detach the guanine base from the RNA, forming a covalent enzyme-RNA intermediate. The proton acceptor active site deprotonates the incoming PreQ1, allowing a nucleophilic attack on the C1' of the ribose to form the product. After dissociation, two additional enzymatic reactions on the tRNA convert PreQ1 to queuine (Q), resulting in the hypermodified nucleoside queuosine (7-(((4,5-cis-dihydroxy-2-cyclopenten-1-yl)amino)methyl)-7-deazaguanosine). The sequence is that of Queuine tRNA-ribosyltransferase from Chlamydia muridarum (strain MoPn / Nigg).